A 177-amino-acid chain; its full sequence is Biotin-dependent acetyl-/propionyl-coenzyme A carboxylase epsilon subunit (177 aa).

The tract at residues 1 to 112 is disordered; the sequence is MGTCPCESSE…TEKPLHPHEP (112 aa). A compositionally biased stretch (polar residues) spans 18–100; sequence VSGTNEVSDG…SDGNETNNPA (83 aa).

As to quaternary structure, interacts with the AccA3/AccD5 biotin-dependent acyl-CoA carboxylase complex. Interacts with the AccA3/AccD6 complex. Is also part of the long-chain acyl-CoA carboxylase (LCC) complex, which is composed of AccA3, AccD4, AccD5 and AccE5. The four subunits are essential for activity, but AccD5, together with AccE5, probably plays a structural role rather than a catalytic one.

Stimulates activity of the AccA3/AccD5 biotin-dependent acyl-CoA carboxylase complex. Interacts with AccD5 and modulates its carboxylase activity for acetyl-CoA and propionyl-CoA. Inhibits activity of the AccA3/AccD6 complex. Is also required for the activity of the long-chain acyl-CoA carboxylase (LCC) complex. The sequence is that of Biotin-dependent acetyl-/propionyl-coenzyme A carboxylase epsilon subunit from Mycobacterium tuberculosis (strain ATCC 25618 / H37Rv).